The chain runs to 157 residues: Large ribosomal subunit protein uL15 (157 aa).

The disordered stretch occupies residues 1-56 (MRLEDIRPQPGSTRRRRRLGRGIAAGQGASCGKGMRGQKARKGGGPRPGFEGGQTP). The segment covering 23-35 (IAAGQGASCGKGM) has biased composition (gly residues).

The protein belongs to the universal ribosomal protein uL15 family. Part of the 50S ribosomal subunit.

In terms of biological role, binds to the 23S rRNA. The protein is Large ribosomal subunit protein uL15 of Synechococcus sp. (strain JA-3-3Ab) (Cyanobacteria bacterium Yellowstone A-Prime).